Consider the following 448-residue polypeptide: Leukocyte immunoglobulin-like receptor subfamily B member 4 (448 aa).

The signal sequence occupies residues 1–21 (MIPTFTALLCLGLSLGPRTHM). Residues 22–259 (QAGPLPKPTL…PHSGLRRHWE (238 aa)) are Extracellular-facing. 2 consecutive Ig-like C2-type domains span residues 27–118 (PKPT…LVMT) and 124–218 (PTLS…LIVS). 2 cysteine pairs are disulfide-bonded: Cys49/Cys98 and Cys144/Cys195. The segment at 217–248 (VSGSLEDPRPSPTRSVSTAAGPEDQPLMPTGS) is disordered. A helical transmembrane segment spans residues 260 to 280 (VLIGVLVVSILLLSLLLFLLL). The Cytoplasmic segment spans residues 281–448 (QHWRQGKHRT…PSVYATLAIH (168 aa)). The tract at residues 297 to 448 (DFQRPPGAAE…PSVYATLAIH (152 aa)) is disordered. Position 319 is a phosphoserine (Ser319). Residues 344-354 (MDTRQSPHDED) are compositionally biased toward basic and acidic residues. Positions 358–363 (VTYAKV) match the ITIM motif 1 motif. Basic and acidic residues predominate over residues 384–398 (LDTKDRQAEEDRQMD). Short sequence motifs (ITIM motif) lie at residues 410–415 (VTYAQL) and 440–445 (SVYATL).

In terms of assembly, interacts with PTPN6. Detected on monocytes, macrophages, dendritic cells, natural killer cells and B-cells (at protein level). Expressed in the lung.

It localises to the cell membrane. Functionally, inhibitory receptor involved in the down-regulation of the immune response and the development of immune tolerance. Receptor for FN1. Receptor for apolipoprotein APOE. Receptor for ALCAM/CD166. Inhibits receptor-mediated phosphorylation of cellular proteins and mobilization of intracellular calcium ions. Inhibits FCGR1A/CD64-mediated monocyte activation by inducing phosphatase-mediated down-regulation of the phosphorylation of multiple proteins including LCK, SYK, LAT and ERK, leading to a reduction in TNF production. This inhibition of monocyte activation occurs at least in part via binding to FN1. Inhibits T cell proliferation, inducing anergy, suppressing the differentiation of IFNG-producing CD8+ cytotoxic T cells and enhancing the generation of CD8+ T suppressor cells. Induces up-regulation of CD86 on dendritic cells. Interferes with TNFRSF5-signaling and NF-kappa-B up-regulation. In Homo sapiens (Human), this protein is Leukocyte immunoglobulin-like receptor subfamily B member 4 (LILRB4).